Here is a 326-residue protein sequence, read N- to C-terminus: DNA-directed RNA polymerase subunit alpha (326 aa).

The interval 1–231 is alpha N-terminal domain (alpha-NTD); it reads MQTALLKPKI…DQLSVFAALE (231 aa). The tract at residues 247-326 is alpha C-terminal domain (alpha-CTD); sequence IDPILLRPVD…ENWPPAGLEK (80 aa).

The protein belongs to the RNA polymerase alpha chain family. As to quaternary structure, homodimer. The RNAP catalytic core consists of 2 alpha, 1 beta, 1 beta' and 1 omega subunit. When a sigma factor is associated with the core the holoenzyme is formed, which can initiate transcription.

The catalysed reaction is RNA(n) + a ribonucleoside 5'-triphosphate = RNA(n+1) + diphosphate. Its function is as follows. DNA-dependent RNA polymerase catalyzes the transcription of DNA into RNA using the four ribonucleoside triphosphates as substrates. The protein is DNA-directed RNA polymerase subunit alpha of Ralstonia nicotianae (strain ATCC BAA-1114 / GMI1000) (Ralstonia solanacearum).